A 618-amino-acid polypeptide reads, in one-letter code: F-box/LRR-repeat protein At3g58940 (618 aa).

The F-box domain maps to 1-47 (MDRVSNLPEEVRCHILSFLPTKHAALTSVLSKSWLNLWKFETNLDID). LRR repeat units follow at residues 147-176 (LKLR…NIDS), 196-223 (EVHM…SIHG), 224-249 (TGVE…NYSD), 282-313 (TLYL…GLKS), 314-339 (DEGR…IIEG), and 354-379 (CISR…GFRG). The tract at residues 587–618 (ATDSERAETSSNQEMTELGQATATYFPPREGE) is disordered. The segment covering 595 to 609 (TSSNQEMTELGQATA) has biased composition (polar residues).

The polypeptide is F-box/LRR-repeat protein At3g58940 (Arabidopsis thaliana (Mouse-ear cress)).